The sequence spans 115 residues: Hydrogenase maturation factor HypA (115 aa).

Position 2 (H2) interacts with Ni(2+). Zn(2+) contacts are provided by C73, C76, C89, and C92.

The protein belongs to the HypA/HybF family.

In terms of biological role, involved in the maturation of [NiFe] hydrogenases. Required for nickel insertion into the metal center of the hydrogenase. The polypeptide is Hydrogenase maturation factor HypA (Nitrosospira multiformis (strain ATCC 25196 / NCIMB 11849 / C 71)).